Consider the following 1010-residue polypeptide: Protein CROWDED NUCLEI 4 (1010 aa).

2 coiled-coil regions span residues 82–350 and 404–763; these read LLLL…LIQN and EKEH…NLER. 2 consecutive short sequence motifs (nuclear localization signal) follow at residues 445-452 and 679-686; these read NRKTTMLE and LKRLDAER. Disordered stretches follow at residues 787–813, 839–937, and 966–994; these read GVSTVSNSEDGYNSSMERQNGLTPSSA, HYEE…TQTP, and DCSESPSEAGRKMGEETEDGDCNQTGINA. Residues 849-863 show a composition bias toward basic and acidic residues; the sequence is EKLKLESSRREEKAY. 2 stretches are compositionally biased toward polar residues: residues 883–893 and 912–921; these read NTSGDETSEPS and TQSVISSPQN.

The protein belongs to the CRWN family. As to quaternary structure, core component of the LINC complex which is composed of inner nuclear membrane SUN domain-containing proteins coupled to outer nuclear membrane WIP proteins, the nucleoskeletal CRWN/LINC proteins, and, possibly, KAKU4. Binds to KAKU4. In terms of tissue distribution, expressed at low levels in roots, leaves, flowers and flower stalks.

The protein resides in the nucleus membrane. Its subcellular location is the nucleus. The protein localises to the nucleoplasm. It is found in the nucleus lamina. It localises to the cytoplasm. In terms of biological role, component of SUN-protein-containing multivariate complexes also called LINC complexes which link the nucleoskeleton and cytoskeleton by providing versatile outer nuclear membrane attachment sites for cytoskeletal filaments. Required for nucleus structure organization (e.g. size and shape). Involved in the maintenance of interphase chromocenter integrity and organization. The chain is Protein CROWDED NUCLEI 4 from Arabidopsis thaliana (Mouse-ear cress).